The following is a 296-amino-acid chain: MAATAEVGVTATLGAAARAVATRQGLLNDPYAEPLLGAVGIDYLTRAIADHTFAADESPVGDDPAVTSLLDALAAHTRFVDEFLAEAGRAGIRQVVILASGLDTRPYRLWWPRGTTVYEIDRPRVLDFKAGVLRGLDARLATNRCAVGIDLRDDWPAALRRVGFDAAQPTAWVAEQLLVGYLKPAEQNRLLRRLTAASAAGSRLAADHLPTWDPLQLEAERAFVEGWRRRGLDIDLASLTHLGEYHYVPEYLATHGWEPAARSIADLLGGLGLGPRRGAGSGGAQFIPEYVTATRV.

S-adenosyl-L-methionine contacts are provided by residues aspartate 121 and aspartate 150–leucine 151.

It belongs to the UPF0677 family.

In terms of biological role, exhibits S-adenosyl-L-methionine-dependent methyltransferase activity. This Mycolicibacterium paratuberculosis (strain ATCC BAA-968 / K-10) (Mycobacterium paratuberculosis) protein is Putative S-adenosyl-L-methionine-dependent methyltransferase MAP_3881.